Reading from the N-terminus, the 276-residue chain is Orotidine 5'-phosphate decarboxylase (276 aa).

K93 (proton donor) is an active-site residue.

It belongs to the OMP decarboxylase family. Type 2 subfamily.

The catalysed reaction is orotidine 5'-phosphate + H(+) = UMP + CO2. Its pathway is pyrimidine metabolism; UMP biosynthesis via de novo pathway; UMP from orotate: step 2/2. In Halorubrum lacusprofundi (strain ATCC 49239 / DSM 5036 / JCM 8891 / ACAM 34), this protein is Orotidine 5'-phosphate decarboxylase.